A 337-amino-acid chain; its full sequence is Phosphate acyltransferase (337 aa).

Belongs to the PlsX family. As to quaternary structure, homodimer. Probably interacts with PlsY.

The protein localises to the cytoplasm. The catalysed reaction is a fatty acyl-[ACP] + phosphate = an acyl phosphate + holo-[ACP]. Its pathway is lipid metabolism; phospholipid metabolism. Catalyzes the reversible formation of acyl-phosphate (acyl-PO(4)) from acyl-[acyl-carrier-protein] (acyl-ACP). This enzyme utilizes acyl-ACP as fatty acyl donor, but not acyl-CoA. The chain is Phosphate acyltransferase from Ehrlichia chaffeensis (strain ATCC CRL-10679 / Arkansas).